A 282-amino-acid polypeptide reads, in one-letter code: Pantothenate synthetase (282 aa).

Residue 26–33 coordinates ATP; that stretch reads MGNLHEGH. His-33 (proton donor) is an active-site residue. Gln-57 serves as a coordination point for (R)-pantoate. Gln-57 is a binding site for beta-alanine. 144-147 is an ATP binding site; it reads GKKD. Residue Gln-150 participates in (R)-pantoate binding. Residues Val-173 and 181–184 each bind ATP; that span reads LSSR.

This sequence belongs to the pantothenate synthetase family. As to quaternary structure, homodimer.

It localises to the cytoplasm. The enzyme catalyses (R)-pantoate + beta-alanine + ATP = (R)-pantothenate + AMP + diphosphate + H(+). Its pathway is cofactor biosynthesis; (R)-pantothenate biosynthesis; (R)-pantothenate from (R)-pantoate and beta-alanine: step 1/1. In terms of biological role, catalyzes the condensation of pantoate with beta-alanine in an ATP-dependent reaction via a pantoyl-adenylate intermediate. This is Pantothenate synthetase from Cupriavidus taiwanensis (strain DSM 17343 / BCRC 17206 / CCUG 44338 / CIP 107171 / LMG 19424 / R1) (Ralstonia taiwanensis (strain LMG 19424)).